The following is a 621-amino-acid chain: Nitrate reductase [NADH] 1 (621 aa).

The Cytochrome b5 heme-binding domain occupies 249–324 (GKEFTMSEVR…LDTYRIGELI (76 aa)). Residues His-284 and His-307 each contribute to the heme site. Positions 361–473 (REKIHCRLVG…KGPLGHVEYT (113 aa)) constitute an FAD-binding FR-type domain. Residues 413 to 416 (RAYT), 430 to 432 (LVK), Phe-435, 447 to 449 (LMT), Ser-497, and Thr-500 each bind FAD.

Belongs to the nitrate reductase family. In terms of assembly, homodimer. The cofactor is FAD. Heme serves as cofactor. Mo-molybdopterin is required as a cofactor.

The enzyme catalyses nitrite + NAD(+) + H2O = nitrate + NADH + H(+). Nitrate reductase is a key enzyme involved in the first step of nitrate assimilation in plants, fungi and bacteria. In Zea mays (Maize), this protein is Nitrate reductase [NADH] 1.